Here is a 142-residue protein sequence, read N- to C-terminus: NTF2-related export protein 2 (142 aa).

Positions A17–F136 constitute an NTF2 domain.

In terms of assembly, associates with NXF1, NXF2, NXF3 and NXF5.

It localises to the nucleus. It is found in the cytoplasm. In terms of biological role, regulator of protein export for NES-containing proteins. Also plays a role in mRNA nuclear export. In Homo sapiens (Human), this protein is NTF2-related export protein 2.